The following is a 457-amino-acid chain: Serine/threonine-protein phosphatase 2A activator 2 (457 aa).

Disordered regions lie at residues 387 to 407 (DAHG…GEGQ) and 426 to 457 (AEQE…IPFD). The span at 391-400 (HIHPAGKPHA) shows a compositional bias: basic residues.

This sequence belongs to the PTPA-type PPIase family.

The protein localises to the cytoplasm. It catalyses the reaction [protein]-peptidylproline (omega=180) = [protein]-peptidylproline (omega=0). PPIases accelerate the folding of proteins. It catalyzes the cis-trans isomerization of proline imidic peptide bonds in oligopeptides. Acts as a regulatory subunit for PP2A-like phosphatases modulating their activity or substrate specificity, probably by inducing a conformational change in the catalytic subunit, a direct target of the PPIase. Can reactivate inactive phosphatase PP2A-phosphatase methylesterase complexes (PP2Ai) in presence of ATP and Mg(2+) by dissociating the inactive form from the complex. This chain is Serine/threonine-protein phosphatase 2A activator 2 (RRD2), found in Mycosarcoma maydis (Corn smut fungus).